The following is a 483-amino-acid chain: Probable cytosol aminopeptidase (483 aa).

Lysine 252 and aspartate 257 together coordinate Mn(2+). Lysine 264 is an active-site residue. Aspartate 275, aspartate 334, and glutamate 336 together coordinate Mn(2+). Arginine 338 is a catalytic residue.

This sequence belongs to the peptidase M17 family. Mn(2+) is required as a cofactor.

Its subcellular location is the cytoplasm. The catalysed reaction is Release of an N-terminal amino acid, Xaa-|-Yaa-, in which Xaa is preferably Leu, but may be other amino acids including Pro although not Arg or Lys, and Yaa may be Pro. Amino acid amides and methyl esters are also readily hydrolyzed, but rates on arylamides are exceedingly low.. The enzyme catalyses Release of an N-terminal amino acid, preferentially leucine, but not glutamic or aspartic acids.. Functionally, presumably involved in the processing and regular turnover of intracellular proteins. Catalyzes the removal of unsubstituted N-terminal amino acids from various peptides. The protein is Probable cytosol aminopeptidase of Legionella pneumophila (strain Corby).